The sequence spans 311 residues: MQRPGPFSTLYGRVLAPLPGRAGGAASGGGGNSWDLPGSHVRLPGRAQSGTRGGAGNTSTSCGDSNSICPAPSTMSKAEEAKKLAGRAAVENHVRNNQVLGIGSGSTIVHAVQRIAERVKQENLNLVCIPTSFQARQLILQYGLTLSDLDRHPEIDLAIDGADEVDADLNLIKGGGGCLTQEKIVAGYASRFIVIADFRKDSKNLGDQWHKGIPIEVIPMAYVPVSRAVSQKFGGVVELRMAVNKAGPVVTDNGNFILDWKFDRVHKWSEVNTAIKMIPGVVDTGLFINMAERVYFGMQDGSVNMREKPFC.

Over residues 22-32 (AGGAASGGGGN) the composition is skewed to gly residues. Residues 22 to 67 (AGGAASGGGGNSWDLPGSHVRLPGRAQSGTRGGAGNTSTSCGDSNS) are disordered. Arg-52 bears the Omega-N-methylarginine mark. Over residues 57–67 (NTSTSCGDSNS) the composition is skewed to polar residues. Position 106 is a phosphoserine (Ser-106).

The protein belongs to the ribose 5-phosphate isomerase family.

It carries out the reaction aldehydo-D-ribose 5-phosphate = D-ribulose 5-phosphate. It participates in carbohydrate degradation; pentose phosphate pathway; D-ribose 5-phosphate from D-ribulose 5-phosphate (non-oxidative stage): step 1/1. Functionally, catalyzes the reversible conversion of ribose-5-phosphate to ribulose 5-phosphate and participates in the first step of the non-oxidative branch of the pentose phosphate pathway. This Homo sapiens (Human) protein is Ribose-5-phosphate isomerase.